Here is a 453-residue protein sequence, read N- to C-terminus: Probable glycine dehydrogenase (decarboxylating) subunit 1 (453 aa).

It belongs to the GcvP family. N-terminal subunit subfamily. As to quaternary structure, the glycine cleavage system is composed of four proteins: P, T, L and H. In this organism, the P 'protein' is a heterodimer of two subunits.

The catalysed reaction is N(6)-[(R)-lipoyl]-L-lysyl-[glycine-cleavage complex H protein] + glycine + H(+) = N(6)-[(R)-S(8)-aminomethyldihydrolipoyl]-L-lysyl-[glycine-cleavage complex H protein] + CO2. The glycine cleavage system catalyzes the degradation of glycine. The P protein binds the alpha-amino group of glycine through its pyridoxal phosphate cofactor; CO(2) is released and the remaining methylamine moiety is then transferred to the lipoamide cofactor of the H protein. The polypeptide is Probable glycine dehydrogenase (decarboxylating) subunit 1 (Nitrosomonas europaea (strain ATCC 19718 / CIP 103999 / KCTC 2705 / NBRC 14298)).